We begin with the raw amino-acid sequence, 319 residues long: Cobalamin biosynthesis protein CbiB (319 aa).

5 helical membrane passes run 56-76, 82-102, 153-173, 204-224, and 296-316; these read VMWI…LALA, WLGW…RSLA, VDGI…LAMA, VANY…AGLC, and LMWG…CWLS.

The protein belongs to the CobD/CbiB family.

It is found in the cell membrane. It functions in the pathway cofactor biosynthesis; adenosylcobalamin biosynthesis. In terms of biological role, converts cobyric acid to cobinamide by the addition of aminopropanol on the F carboxylic group. However, the true cosubstrate could be (R)-1-amino-2-propanol O-2-phosphate, leading to cobinamide phosphate. In Salmonella arizonae (strain ATCC BAA-731 / CDC346-86 / RSK2980), this protein is Cobalamin biosynthesis protein CbiB.